Here is a 150-residue protein sequence, read N- to C-terminus: Infection structure-specific protein 24 (150 aa).

In terms of biological role, involved in the development of infection structures. The germ tube elongates across the leaf surface of the infected plant until it recognizes a stomate. Physical stimuli provided by the stomate induce differentiation of the germ tube to form a series of infection structures involved in host colonization. In Uromyces appendiculatus (Rust fungus), this protein is Infection structure-specific protein 24 (INF24).